Reading from the N-terminus, the 519-residue chain is ATP synthase subunit alpha, mitochondrial (519 aa).

ATP is bound at residue 188–195 (GDRQTGKS).

The protein belongs to the ATPase alpha/beta chains family. F-type ATPases have 2 components, CF(1) - the catalytic core - and CF(0) - the membrane proton channel. CF(1) has five subunits: alpha(3), beta(3), gamma(1), delta(1), epsilon(1). CF(0) has three main subunits: a, b and c.

It is found in the mitochondrion. The protein localises to the mitochondrion inner membrane. Functionally, mitochondrial membrane ATP synthase (F(1)F(0) ATP synthase or Complex V) produces ATP from ADP in the presence of a proton gradient across the membrane which is generated by electron transport complexes of the respiratory chain. F-type ATPases consist of two structural domains, F(1) - containing the extramembraneous catalytic core, and F(0) - containing the membrane proton channel, linked together by a central stalk and a peripheral stalk. During catalysis, ATP synthesis in the catalytic domain of F(1) is coupled via a rotary mechanism of the central stalk subunits to proton translocation. Subunits alpha and beta form the catalytic core in F(1). Rotation of the central stalk against the surrounding alpha(3)beta(3) subunits leads to hydrolysis of ATP in three separate catalytic sites on the beta subunits. Subunit alpha does not bear the catalytic high-affinity ATP-binding sites. This is ATP synthase subunit alpha, mitochondrial (atp1) from Dictyostelium citrinum (Slime mold).